We begin with the raw amino-acid sequence, 241 residues long: Homeobox protein TGIF2LX (241 aa).

2 disordered regions span residues 1–58 and 126–209; these read MEAA…GNLP and TGKD…VSPE. The span at 21–39 shows a compositional bias: polar residues; the sequence is AKTQSPAQDTSIMSRNNAD. The homeobox; TALE-type DNA-binding region spans 48 to 111; the sequence is EHKKKRKGNL…INARRRILPD (64 aa).

It belongs to the TALE/TGIF homeobox family.

It localises to the nucleus. Functionally, may have a transcription role in testis. This is Homeobox protein TGIF2LX (TGIF2LX) from Gorilla gorilla gorilla (Western lowland gorilla).